Reading from the N-terminus, the 109-residue chain is Small ribosomal subunit protein bS20 (109 aa).

Residues 1–26 (MANIKSAKKRAIQSEKRRKHNASRRS) are disordered.

The protein belongs to the bacterial ribosomal protein bS20 family.

In terms of biological role, binds directly to 16S ribosomal RNA. This chain is Small ribosomal subunit protein bS20, found in Hamiltonella defensa subsp. Acyrthosiphon pisum (strain 5AT).